The primary structure comprises 384 residues: Cytochrome b (384 aa).

A run of 4 helical transmembrane segments spans residues 32–52, 75–96, 111–131, and 176–196; these read FGSLLGLCLAMQIVTGCFLSM, FLLRYFHANGASLFFLCLYFHI, WRVGIVIFLLTMATAFLGYVL, and FFSLHFLFPFILAILVVVHLI. His81 and His95 together coordinate heme b. His180 and His194 together coordinate heme b. His199 contacts a ubiquinone. Helical transmembrane passes span 224-244, 286-306, 318-338, and 345-366; these read SKDWYGIVVTLMLLSIVVYLM, FGGVVSMFLSILILFFFPLLH, FGRMAFWSFVVNFVLLTWIGS, and FIIIGQLVALYYFFYFLILIPL.

This sequence belongs to the cytochrome b family. As to quaternary structure, the main subunits of complex b-c1 are: cytochrome b, cytochrome c1 and the Rieske protein. It depends on heme b as a cofactor.

Its subcellular location is the mitochondrion inner membrane. Functionally, component of the ubiquinol-cytochrome c reductase complex (complex III or cytochrome b-c1 complex) that is part of the mitochondrial respiratory chain. The b-c1 complex mediates electron transfer from ubiquinol to cytochrome c. Contributes to the generation of a proton gradient across the mitochondrial membrane that is then used for ATP synthesis. This Acropora tenuis (Purple tipped acropora) protein is Cytochrome b (MT-CYB).